The sequence spans 444 residues: Methylenetetrahydrofolate--tRNA-(uracil-5-)-methyltransferase TrmFO (444 aa).

10-15 (GAGLAG) contributes to the FAD binding site.

This sequence belongs to the MnmG family. TrmFO subfamily. The cofactor is FAD.

It localises to the cytoplasm. It catalyses the reaction uridine(54) in tRNA + (6R)-5,10-methylene-5,6,7,8-tetrahydrofolate + NADH + H(+) = 5-methyluridine(54) in tRNA + (6S)-5,6,7,8-tetrahydrofolate + NAD(+). The enzyme catalyses uridine(54) in tRNA + (6R)-5,10-methylene-5,6,7,8-tetrahydrofolate + NADPH + H(+) = 5-methyluridine(54) in tRNA + (6S)-5,6,7,8-tetrahydrofolate + NADP(+). Its function is as follows. Catalyzes the folate-dependent formation of 5-methyl-uridine at position 54 (M-5-U54) in all tRNAs. This Streptococcus equi subsp. equi (strain 4047) protein is Methylenetetrahydrofolate--tRNA-(uracil-5-)-methyltransferase TrmFO.